The following is a 238-amino-acid chain: Chromosome partition protein MukE (238 aa).

This sequence belongs to the MukE family. In terms of assembly, interacts, and probably forms a ternary complex, with MukF and MukB. The complex formation is stimulated by calcium or magnesium.

The protein localises to the cytoplasm. Its subcellular location is the nucleoid. Functionally, involved in chromosome condensation, segregation and cell cycle progression. May participate in facilitating chromosome segregation by condensation DNA from both sides of a centrally located replisome during cell division. Probably acts via its interaction with MukB and MukF. The chain is Chromosome partition protein MukE from Haemophilus ducreyi (strain 35000HP / ATCC 700724).